Consider the following 65-residue polypeptide: Chymotrypsin/elastase isoinhibitors 2 to 5 (65 aa).

5 disulfides stabilise this stretch: cysteine 4-cysteine 37, cysteine 13-cysteine 32, cysteine 16-cysteine 28, cysteine 20-cysteine 59, and cysteine 39-cysteine 53. The region spanning 4-59 (CGKNEVWTECTGCELKCGQDEKTPCALMCRPPSCECTPGRGMRRTHDGKCVPVSEC) is the TIL domain.

It belongs to the serine protease inhibitor-like (TIL domain-containing) family.

Its subcellular location is the secreted. Functionally, defends the organism against the host's proteinases. This is Chymotrypsin/elastase isoinhibitors 2 to 5 from Ascaris suum (Pig roundworm).